We begin with the raw amino-acid sequence, 551 residues long: RCC1 and BTB domain-containing protein 2 (551 aa).

RCC1 repeat units lie at residues 64-115 (NDEI…VLAT), 117-169 (DGEV…VLTS), 171-222 (GEVF…AVVD), 223-274 (TGEV…VLTD), 276-326 (GQIY…AAKT), and 328-382 (GGHV…TVAE). A BTB domain is found at 394–457 (ADLKFLVDGK…LYTDNISLSP (64 aa)).

In terms of tissue distribution, expressed in testis and heart (at protein level).

It localises to the cytoplasmic vesicle. It is found in the secretory vesicle. The protein resides in the acrosome. The sequence is that of RCC1 and BTB domain-containing protein 2 (Rcbtb2) from Mus musculus (Mouse).